A 522-amino-acid chain; its full sequence is Ribose import ATP-binding protein RbsA 1 (522 aa).

ABC transporter domains are found at residues leucine 8 to isoleucine 243 and arginine 249 to asparagine 496. Glycine 40–serine 47 is an ATP binding site. A disordered region spans residues alanine 492 to histidine 522. The span at lysine 499 to histidine 522 shows a compositional bias: basic and acidic residues.

The protein belongs to the ABC transporter superfamily. Ribose importer (TC 3.A.1.2.1) family. As to quaternary structure, the complex is composed of an ATP-binding protein (RbsA), two transmembrane proteins (RbsC) and a solute-binding protein (RbsB).

The protein resides in the cell membrane. It carries out the reaction D-ribose(out) + ATP + H2O = D-ribose(in) + ADP + phosphate + H(+). In terms of biological role, part of the ABC transporter complex RbsABC involved in ribose import. Responsible for energy coupling to the transport system. In Streptomyces avermitilis (strain ATCC 31267 / DSM 46492 / JCM 5070 / NBRC 14893 / NCIMB 12804 / NRRL 8165 / MA-4680), this protein is Ribose import ATP-binding protein RbsA 1.